The primary structure comprises 316 residues: HPr kinase/phosphorylase (316 aa).

Residues H146 and K167 contribute to the active site. 161 to 168 is an ATP binding site; the sequence is GESGLGKS. S168 serves as a coordination point for Mg(2+). D185 serves as the catalytic Proton acceptor; for phosphorylation activity. Proton donor; for dephosphorylation activity. An important for the catalytic mechanism of both phosphorylation and dephosphorylation region spans residues 209-218; that stretch reads LEVRGIGLLD. E210 lines the Mg(2+) pocket. R252 is an active-site residue. The tract at residues 273-278 is important for the catalytic mechanism of dephosphorylation; sequence QVEAGR.

Belongs to the HPrK/P family. Homohexamer. It depends on Mg(2+) as a cofactor.

It catalyses the reaction [HPr protein]-L-serine + ATP = [HPr protein]-O-phospho-L-serine + ADP + H(+). The catalysed reaction is [HPr protein]-O-phospho-L-serine + phosphate + H(+) = [HPr protein]-L-serine + diphosphate. In terms of biological role, catalyzes the ATP- as well as the pyrophosphate-dependent phosphorylation of a specific serine residue in HPr, a phosphocarrier protein of the phosphoenolpyruvate-dependent sugar phosphotransferase system (PTS). HprK/P also catalyzes the pyrophosphate-producing, inorganic phosphate-dependent dephosphorylation (phosphorolysis) of seryl-phosphorylated HPr (P-Ser-HPr). In Polaromonas sp. (strain JS666 / ATCC BAA-500), this protein is HPr kinase/phosphorylase.